The chain runs to 502 residues: ATP synthase subunit alpha (502 aa).

ATP is bound at residue Gly-169 to Thr-176.

The protein belongs to the ATPase alpha/beta chains family. In terms of assembly, F-type ATPases have 2 components, CF(1) - the catalytic core - and CF(0) - the membrane proton channel. CF(1) has five subunits: alpha(3), beta(3), gamma(1), delta(1), epsilon(1). CF(0) has three main subunits: a(1), b(2) and c(9-12). The alpha and beta chains form an alternating ring which encloses part of the gamma chain. CF(1) is attached to CF(0) by a central stalk formed by the gamma and epsilon chains, while a peripheral stalk is formed by the delta and b chains.

Its subcellular location is the cell inner membrane. The enzyme catalyses ATP + H2O + 4 H(+)(in) = ADP + phosphate + 5 H(+)(out). Functionally, produces ATP from ADP in the presence of a proton gradient across the membrane. The alpha chain is a regulatory subunit. This chain is ATP synthase subunit alpha, found in Geotalea daltonii (strain DSM 22248 / JCM 15807 / FRC-32) (Geobacter daltonii).